Here is a 372-residue protein sequence, read N- to C-terminus: Aminomethyltransferase (372 aa).

It belongs to the GcvT family. As to quaternary structure, the glycine cleavage system is composed of four proteins: P, T, L and H.

It carries out the reaction N(6)-[(R)-S(8)-aminomethyldihydrolipoyl]-L-lysyl-[protein] + (6S)-5,6,7,8-tetrahydrofolate = N(6)-[(R)-dihydrolipoyl]-L-lysyl-[protein] + (6R)-5,10-methylene-5,6,7,8-tetrahydrofolate + NH4(+). Functionally, the glycine cleavage system catalyzes the degradation of glycine. The polypeptide is Aminomethyltransferase (Prochlorococcus marinus (strain NATL2A)).